We begin with the raw amino-acid sequence, 183 residues long: Ribosome maturation factor RimP (183 aa).

Belongs to the RimP family.

The protein localises to the cytoplasm. Functionally, required for maturation of 30S ribosomal subunits. The polypeptide is Ribosome maturation factor RimP (Mycobacterium bovis (strain ATCC BAA-935 / AF2122/97)).